The following is a 397-amino-acid chain: Elongation factor Tu (397 aa).

Residues 10 to 206 enclose the tr-type G domain; that stretch reads KPHVNIGTIG…AVDDNVPEPE (197 aa). Residues 19–26 are G1; that stretch reads GHVDHGKT. 19-26 serves as a coordination point for GTP; that stretch reads GHVDHGKT. Threonine 26 contacts Mg(2+). The G2 stretch occupies residues 62–66; it reads GITIN. A G3 region spans residues 83 to 86; the sequence is DAPG. GTP contacts are provided by residues 83–87 and 138–141; these read DAPGH and NKSD. Residues 138–141 form a G4 region; sequence NKSD. Positions 176 to 178 are G5; it reads SAL.

This sequence belongs to the TRAFAC class translation factor GTPase superfamily. Classic translation factor GTPase family. EF-Tu/EF-1A subfamily. As to quaternary structure, monomer.

It is found in the cytoplasm. It catalyses the reaction GTP + H2O = GDP + phosphate + H(+). Its function is as follows. GTP hydrolase that promotes the GTP-dependent binding of aminoacyl-tRNA to the A-site of ribosomes during protein biosynthesis. In Brevibacterium linens, this protein is Elongation factor Tu.